Here is a 228-residue protein sequence, read N- to C-terminus: Prolactin-2B1 (228 aa).

Residues 1-31 form the signal peptide; sequence MLLSLTQMLSSRASSRLFLVSYLLLWENVVS. Cystine bridges form between Cys-89/Cys-194 and Cys-203/Cys-228.

This sequence belongs to the somatotropin/prolactin family. As to expression, expressed specifically in placenta. Expressed at high levels in trophoblast cells from both junctional and labyrinth zones of the chorioallantoic placenta the last week of gestation.

It is found in the secreted. This chain is Prolactin-2B1 (Prl2b1), found in Mus musculus (Mouse).